We begin with the raw amino-acid sequence, 200 residues long: Adenylate kinase (200 aa).

Position 10 to 15 (10 to 15) interacts with ATP; it reads GAGKGT. An NMP region spans residues 30–59; the sequence is STGDMLRAAVAAETPVGLEAKAIMESGGLV. AMP contacts are provided by residues Thr-31, Arg-36, 57-59, 85-88, and Gln-92; these read GLV and GFPR. The tract at residues 126–142 is LID; it reads KRAEETAARGQPVRKDD. Position 127 (Arg-127) interacts with ATP. 2 residues coordinate AMP: Arg-139 and Arg-150. Residue Lys-178 coordinates ATP.

This sequence belongs to the adenylate kinase family. As to quaternary structure, monomer.

The protein localises to the cytoplasm. It carries out the reaction AMP + ATP = 2 ADP. It functions in the pathway purine metabolism; AMP biosynthesis via salvage pathway; AMP from ADP: step 1/1. In terms of biological role, catalyzes the reversible transfer of the terminal phosphate group between ATP and AMP. Plays an important role in cellular energy homeostasis and in adenine nucleotide metabolism. The protein is Adenylate kinase of Methylorubrum extorquens (strain CM4 / NCIMB 13688) (Methylobacterium extorquens).